Here is a 354-residue protein sequence, read N- to C-terminus: Arginase-2, mitochondrial (354 aa).

The N-terminal 22 residues, 1–22 (MSYGSCVSRLLRTRVQSVLKKS), are a transit peptide targeting the mitochondrion. Mn(2+)-binding residues include His120, Asp143, His145, and Asp147. Residues 145–149 (HADIN), 156–158 (SGN), and Asp202 each bind substrate. Residues Asp251 and Asp253 each contribute to the Mn(2+) site. Residues Thr265 and Glu296 each coordinate substrate. The tract at residues 330–354 (GHTVYEQLPPPSSPHESENAERVRI) is disordered. Positions 344-354 (HESENAERVRI) are enriched in basic and acidic residues.

It belongs to the arginase family. In terms of assembly, homotrimer. Mn(2+) is required as a cofactor.

It localises to the mitochondrion. The catalysed reaction is L-arginine + H2O = urea + L-ornithine. The protein operates within nitrogen metabolism; urea cycle; L-ornithine and urea from L-arginine: step 1/1. May play a role in the regulation of extra-urea cycle arginine metabolism and also in down-regulation of nitric oxide synthesis. Extrahepatic arginase functions to regulate L-arginine bioavailability to nitric oxid synthase (NOS). Arginine metabolism is a critical regulator of innate and adaptive immune responses. Seems to be involved in negative regulation of the survival capacity of activated T cells. May suppress inflammation-related signaling in asthmatic airway epithelium. May play a role in promoting prenatal immune suppression. Regulates RPS6KB1 signaling, which promotes endothelial cell senescence and inflammation and implicates NOS3/eNOS dysfunction. Can inhibit endothelial autophagy independently of its enzymatic activity implicating mTORC2 signaling. Involved in vascular smooth muscle cell senescence and apoptosis independently of its enzymatic activity. This chain is Arginase-2, mitochondrial (ARG2), found in Oryctolagus cuniculus (Rabbit).